Here is a 319-residue protein sequence, read N- to C-terminus: Thiamine-monophosphate kinase (319 aa).

Mg(2+) is bound by residues Asp28, Thr43, Thr44, and Asp45. Position 52 (His52) interacts with substrate. Asp73 is a Mg(2+) binding site. Residues Tyr104, 121–122 (GD), and Arg145 each bind ATP. Asp122 lines the Mg(2+) pocket. Asp218 is a Mg(2+) binding site. Ser220 lines the ATP pocket. Asp221 is a binding site for Mg(2+). Substrate contacts are provided by Glu268 and Tyr315.

The protein belongs to the thiamine-monophosphate kinase family.

It catalyses the reaction thiamine phosphate + ATP = thiamine diphosphate + ADP. It functions in the pathway cofactor biosynthesis; thiamine diphosphate biosynthesis; thiamine diphosphate from thiamine phosphate: step 1/1. Catalyzes the ATP-dependent phosphorylation of thiamine-monophosphate (TMP) to form thiamine-pyrophosphate (TPP), the active form of vitamin B1. In Methanocaldococcus jannaschii (strain ATCC 43067 / DSM 2661 / JAL-1 / JCM 10045 / NBRC 100440) (Methanococcus jannaschii), this protein is Thiamine-monophosphate kinase.